We begin with the raw amino-acid sequence, 75 residues long: Small ribosomal subunit protein bS18 (75 aa).

It belongs to the bacterial ribosomal protein bS18 family. In terms of assembly, part of the 30S ribosomal subunit. Forms a tight heterodimer with protein bS6.

Its function is as follows. Binds as a heterodimer with protein bS6 to the central domain of the 16S rRNA, where it helps stabilize the platform of the 30S subunit. The protein is Small ribosomal subunit protein bS18 of Pseudoalteromonas atlantica (strain T6c / ATCC BAA-1087).